The chain runs to 745 residues: Jacalin-related lectin 4 (745 aa).

Jacalin-type lectin domains follow at residues 2–148 (AQKL…YFAP), 151–294 (PTKF…YFSP), 307–448 (AEKL…YFVT), 451–594 (PTKF…YFSR), and 601–744 (AETL…YVMP).

It belongs to the jacalin lectin family.

This Arabidopsis thaliana (Mouse-ear cress) protein is Jacalin-related lectin 4 (JAL4).